The following is a 311-amino-acid chain: Dihydroorotate dehydrogenase A (fumarate) (311 aa).

FMN-binding positions include serine 19 and 43–44 (KS). Residues lysine 43, 67-71 (NSMGL), and asparagine 127 each bind substrate. Asparagine 127 contacts FMN. Cysteine 130 acts as the Nucleophile in catalysis. 2 residues coordinate FMN: lysine 164 and valine 192. Substrate is bound at residue 193 to 194 (NS). Residues glycine 221, 249 to 250 (GG), and 271 to 272 (GT) contribute to the FMN site.

This sequence belongs to the dihydroorotate dehydrogenase family. Type 1 subfamily. In terms of assembly, homodimer. It depends on FMN as a cofactor.

The protein localises to the cytoplasm. It carries out the reaction (S)-dihydroorotate + fumarate = orotate + succinate. It participates in pyrimidine metabolism; UMP biosynthesis via de novo pathway. Functionally, catalyzes the conversion of dihydroorotate to orotate with fumarate as the electron acceptor. This chain is Dihydroorotate dehydrogenase A (fumarate) (pyrDA), found in Lactococcus lactis subsp. lactis (strain IL1403) (Streptococcus lactis).